Here is a 41-residue protein sequence, read N- to C-terminus: Diuretic hormone 1 (41 aa).

The residue at position 41 (isoleucine 41) is an Isoleucine amide.

It localises to the secreted. Its function is as follows. Regulation of fluid secretion. May stimulate primary urine secretion by Malpighian tubules and causes a dose-dependent stimulation of cAMP levels in the tubules. In Hyles lineata (White-lined sphinx moth), this protein is Diuretic hormone 1.